Consider the following 236-residue polypeptide: Sperm flagellar protein 1 (236 aa).

A Calponin-homology (CH) domain is found at 7–112; sequence EEALHQLYLW…VLIPLRQRLE (106 aa). The disordered stretch occupies residues 115-176; that stretch reads QRRRKQGAGS…PRPPAYNRAL (62 aa). The tract at residues 183-236 is essential for homodimerization and microtubule bundling activity; that stretch reads VLQIAEKEQELLASQETVQVLQMKVRRLEHLLQLKNVRIEDLSRRLQQAERKQR.

Homodimer. Interacts with actin, TJP1, CGN and CDH1. In terms of tissue distribution, expressed in the intestinal epithelial cells (at protein level).

It is found in the cytoplasm. Its subcellular location is the cell projection. The protein resides in the cilium. The protein localises to the flagellum. It localises to the cytoskeleton. It is found in the cilium axoneme. Its subcellular location is the apical cell membrane. The protein resides in the basolateral cell membrane. The protein localises to the stress fiber. It localises to the microvillus. It is found in the lamellipodium. Its subcellular location is the filopodium. Microtubule-associated protein involved in the stabilization of microtubules along the axis of migration during radial intercalation. Promotes the establishment and stabilization of an axis of microtubules required for the active migration of cells into the outer epithelium. Microtubule-associated protein that promotes microtubule bundling and stabilizes microtubules against depolymerization in response to cold shock. Essential for ciliary central apparatus formation which requires both its microtubule-binding and bundling activities and for ciliary localization of HYDIN and SPAG6 in ependymal cilia. Binds actin in intestinal epithelial cells (IECs), essential for IECs survival and contributes to formation of filopodia and lamellipodia in migrating IECs. Regulates planar cell polarity signaling pathway and asymmetric microtubule accumulation in ciliated epithelia. This Homo sapiens (Human) protein is Sperm flagellar protein 1 (SPEF1).